The following is a 406-amino-acid chain: Eukaryotic initiation factor 4A-I (406 aa).

Residues 1–21 (MSASQDSRSRDNGPDGMEPEG) are disordered. Residue serine 2 is modified to N-acetylserine. Serine 4 is modified (phosphoserine). The Q motif motif lies at 32 to 60 (DSFDDMNLSESLLRGIYAYGFEKPSAIQQ). The region spanning 63–234 (ILPCIKGYDV…KKFMRDPIRI (172 aa)) is the Helicase ATP-binding domain. 76 to 83 (AQSGTGKT) provides a ligand contact to ATP. The residue at position 118 (lysine 118) is an N6-acetyllysine. Residue lysine 146 forms a Glycyl lysine isopeptide (Lys-Gly) (interchain with G-Cter in SUMO2) linkage. A Phosphothreonine modification is found at threonine 158. N6-acetyllysine is present on lysine 174. Positions 182-185 (DEAD) match the DEAD box motif. Lysine 193 is modified (N6-acetyllysine). Lysine 225 participates in a covalent cross-link: Glycyl lysine isopeptide (Lys-Gly) (interchain with G-Cter in SUMO2). Lysine 238 is subject to N6-acetyllysine; alternate. Lysine 238 participates in a covalent cross-link: Glycyl lysine isopeptide (Lys-Gly) (interchain with G-Cter in SUMO2); alternate. The Helicase C-terminal domain occupies 245–406 (GIRQFYINVE…EMPLNVADLI (162 aa)). Residues lysine 309, lysine 369, and lysine 381 each participate in a glycyl lysine isopeptide (Lys-Gly) (interchain with G-Cter in SUMO2) cross-link.

It belongs to the DEAD box helicase family. eIF4A subfamily. In terms of assembly, eIF4F is a multi-subunit complex, the composition of which varies with external and internal environmental conditions. It is composed of at least EIF4A, EIF4E and EIF4G1/EIF4G3. Interacts with PAIP1, EIF4E and UPF2. Found in a complex with XPO7, EIF4A1, ARHGAP1, VPS26A, VPS29, VPS35 and SFN. May interact with NOM1. Interacts with PDCD4; this interferes with the interaction between EIF4A and EIF4G. Interacts with RBM4. Interacts with DDX3X in an RNA-independent manner. Interacts with PKP1 (via N-terminus); the interaction promotes EIF4A1 recruitment to the cap-dependent translation complex and EIF4A1 ATPase activity.

It localises to the cytoplasm. Its subcellular location is the perinuclear region. The protein resides in the cell membrane. The protein localises to the stress granule. It carries out the reaction ATP + H2O = ADP + phosphate + H(+). ATP-dependent RNA helicase which is a subunit of the eIF4F complex involved in cap recognition and is required for mRNA binding to ribosome. In the current model of translation initiation, eIF4A unwinds RNA secondary structures in the 5'-UTR of mRNAs which is necessary to allow efficient binding of the small ribosomal subunit, and subsequent scanning for the initiator codon. As a result, promotes cell proliferation and growth. The polypeptide is Eukaryotic initiation factor 4A-I (EIF4A1) (Bos taurus (Bovine)).